Consider the following 820-residue polypeptide: Phosphoenolpyruvate synthase (820 aa).

Catalysis depends on His438, which acts as the Tele-phosphohistidine intermediate. 7 residues coordinate substrate: Arg539, Arg587, Glu689, Gly710, Ser711, Asn712, and Asp713. Glu689 serves as a coordination point for Mg(2+). Asp713 contacts Mg(2+). Cys762 serves as the catalytic Proton donor.

This sequence belongs to the PEP-utilizing enzyme family. Requires Mg(2+) as cofactor.

The catalysed reaction is pyruvate + ATP + H2O = phosphoenolpyruvate + AMP + phosphate + 2 H(+). The protein operates within carbohydrate biosynthesis; gluconeogenesis. In terms of biological role, catalyzes the phosphorylation of pyruvate to phosphoenolpyruvate. This is Phosphoenolpyruvate synthase (ppsA) from Aeropyrum pernix (strain ATCC 700893 / DSM 11879 / JCM 9820 / NBRC 100138 / K1).